The sequence spans 765 residues: Alpha,alpha-trehalose phosphorylase (765 aa).

352-353 (WD) provides a ligand contact to substrate. Glutamate 479 acts as the Proton donor in catalysis. Residue 591 to 592 (KQ) coordinates substrate.

The protein belongs to the glycosyl hydrolase 65 family. In terms of assembly, homodimer.

The catalysed reaction is alpha,alpha-trehalose + phosphate = beta-D-glucose 1-phosphate + D-glucose. It participates in glycan degradation; trehalose degradation. Its function is as follows. Catalyzes the reversible phosphorolytic cleavage of trehalose. Phosphorolysis is specific for trehalose. The polypeptide is Alpha,alpha-trehalose phosphorylase (treP) (Geobacillus stearothermophilus (Bacillus stearothermophilus)).